The chain runs to 322 residues: Acetyl-coenzyme A carboxylase carboxyl transferase subunit alpha (322 aa).

One can recognise a CoA carboxyltransferase C-terminal domain in the interval R39–E293.

Belongs to the AccA family. Acetyl-CoA carboxylase is a heterohexamer composed of biotin carboxyl carrier protein (AccB), biotin carboxylase (AccC) and two subunits each of ACCase subunit alpha (AccA) and ACCase subunit beta (AccD).

It localises to the cytoplasm. It catalyses the reaction N(6)-carboxybiotinyl-L-lysyl-[protein] + acetyl-CoA = N(6)-biotinyl-L-lysyl-[protein] + malonyl-CoA. The protein operates within lipid metabolism; malonyl-CoA biosynthesis; malonyl-CoA from acetyl-CoA: step 1/1. Component of the acetyl coenzyme A carboxylase (ACC) complex. First, biotin carboxylase catalyzes the carboxylation of biotin on its carrier protein (BCCP) and then the CO(2) group is transferred by the carboxyltransferase to acetyl-CoA to form malonyl-CoA. The protein is Acetyl-coenzyme A carboxylase carboxyl transferase subunit alpha of Thiobacillus denitrificans (strain ATCC 25259 / T1).